Reading from the N-terminus, the 340-residue chain is Lipoate--protein ligase 2 (340 aa).

The BPL/LPL catalytic domain occupies phenylalanine 31 to glutamate 222. ATP contacts are provided by residues arginine 73, glycine 78–tyrosine 81, lysine 136, and alanine 140. (R)-lipoate is bound at residue lysine 136. The stretch at glutamine 293–aspartate 321 forms a coiled coil.

The protein belongs to the LplA family.

It catalyses the reaction L-lysyl-[lipoyl-carrier protein] + (R)-lipoate + ATP = N(6)-[(R)-lipoyl]-L-lysyl-[lipoyl-carrier protein] + AMP + diphosphate + H(+). The protein operates within protein modification; protein lipoylation via exogenous pathway; protein N(6)-(lipoyl)lysine from lipoate: step 1/2. It participates in protein modification; protein lipoylation via exogenous pathway; protein N(6)-(lipoyl)lysine from lipoate: step 2/2. In terms of biological role, catalyzes specifically the lipoylation of GcvH-L (SAV0324), likely via the ATP-dependent activation of lipoate to lipoyl-AMP and the transfer of the activated lipoyl onto the lipoyl domain of the target protein. Can also utilize lipoamide as substrate for GcvH-L modification. This Staphylococcus aureus (strain Mu50 / ATCC 700699) protein is Lipoate--protein ligase 2.